Here is an 86-residue protein sequence, read N- to C-terminus: Kappa-theraphotoxin-Cg1a 4 (86 aa).

Positions 1-21 are cleaved as a signal peptide; the sequence is MKASVLITLAVLGVMFVWASA. A propeptide spanning residues 22–50 is cleaved from the precursor; the sequence is AELEERGSDQRDSPAWLKSMERIFQSEER. Intrachain disulfides connect C52/C66, C59/C71, and C65/C78. Position 84 is a phenylalanine amide (F84).

It belongs to the neurotoxin 10 (Hwtx-1) family. 28 (Jztx-11) subfamily. In terms of tissue distribution, expressed by the venom gland.

Its subcellular location is the secreted. Functionally, this toxin acts as a voltage-dependent gating-modifier. It inhibits the sodium conductance (IC(50)=124 nM) and slows the fast inactivation (EC(50)=1180 nM) of Nav1.5/SCN5A. It significantly shifts the activation to more depolarized voltages and decreases the deactivation of Nav1.5 currents upon extreme depolarization, but only slightly affects voltage-dependence of steady-state inactivation. In addition, this toxin causes an approximately five-fold decrease in the rate of recovery from inactivation and an approximately 1.9-fold reduction in the closed-state inactivation rate. This toxin integrates the functions of site 3 toxins (alpha-scorpion toxins) with site 4 toxins (beta-scorpion and spider toxins) by targeting multiple sites on Nav1.5. Also shows inhibition of voltage-gated potassium channels (5 uM completely inhibits Kv2.1/KCNB1, whereas 5 uM moderately inhibits Kv4.2/KCND2 Kv4.1/KCND1 channels). The polypeptide is Kappa-theraphotoxin-Cg1a 4 (Chilobrachys guangxiensis (Chinese earth tiger tarantula)).